The following is a 1416-amino-acid chain: MEPMTPMRPIPGAYVNTPAPPTANPARRRLFTEASSSGAAATTQLGAAPAPLASTMAPGPEINSGLMTPQAREDLPPVAKAAQVVNQTLQLDDSYPDLDSYCRPGASSDYEMQSSDSSWAPFHVVRHHNIPDKVFEHLNAGEVFTKLGLFAEIGYAWASIDSSLFLWDYTHPNPELIGYEEATHTITAVALVPPKPGVFVKTITHVLVVATTSEIILLGVSATPTPSGSKSLTLYSTRMSVHRGGSDVSFIVGTKDGRIFLGGESDTDIHEIFYQQEERWFSSRCGKINHSHPGWSAVVPSLAGLPFGSRQQEWLRGLYVDDTRNLLYSLSNRSTIRTYHMEGPEKLTKVIEKDKTSCLRDFAHMADSSPLFTDKTNIVALSPIPATEASKLHLMALTDTGCRLFLSATSSASYTMGGATSLAPQSMQLQFVKFPPRESPTRIRTLNGQIIDSQLDKTSRALDPSALGFRFSPGYFFDVVRKHPNQDMLFVSAPDTGRIKVTQPASALKYFEQGTWIELENGNRTIEIGLTTAPFAAAKQPLGFGNELAVQFDQVPGEFAVLTNTGVHIVRRRRLVDIFAKALGNCVSASDDALEREVRKFINQYGRVETIAAALAVACGQGSDLRTGTGRGMDRNTENLARAAFIEYGGQPRLAESDGKQSVSESVRLSSRHDALALYLTRLVRTLWKAKVVQVGSGSDISSTIPTSKLVTIQENVERLRNFLEANKSTIQGLAPPSERLFGRQEDIANQKEHQALHALQKLMESISEGISFVLMLFDERVSDIYARLDAVSQQQLKDLTYEQLFSQTPGKELAKVLVKAIVNRNIASGANVETVADALRRRCGSFCSPDDVVTFKAQEQLQRASEQAHNSPVLRALLAESLRLFEQVAGSLTPANLTTAVEQYISLKYYAGAIQLCLTVAQQKDRGNTALSWVNDGKPANDSRKKAFDERKICYNLIHQVLDKLESDFAGEPELVDGRPTLAATKRMEAYNVVNDSSDEVFHFDLYEWYIEKGWTDRILSIDSPHVITYLQRLAETDFRHAELLCRFYTTRSRFFEAAQVQTNLAKSDLNISLKDRIILLSRAKGNASVNTIGISRQQQQQLNHEASELLEIAHIQDDLLERLVADPRIPEERKAEIEEFLDGPIRTLTDLFNDYADQANYYDLCLLIFHAADFHNPRTILDTWNNLINQSHFEAEQRREYWEIVQAGGDLPAGVIAPIAEPPLPYVYVSQQIQLIAHRTSLDSLIFPVNSLLPVVCAYAINNGQDASIGADPCWPIQLFLNLGVPHALVVQVLENVLDTQEAPFTGRRRKLVVQWIAMAVDMWVREVERRGAMAAAAASGASGSEAVMGSWVSELLGRADQVLTQIAGTGATLRGGAASDAEEIASLRRTVKGLKRSVDMLLGGEMARMSFFR.

2 disordered regions span residues 1–26 (MEPM…ANPA) and 50–69 (APLA…LMTP).

Belongs to the non-repetitive/WGA-negative nucleoporin family. As to quaternary structure, component of the nuclear pore complex (NPC). NPC constitutes the exclusive means of nucleocytoplasmic transport. NPCs allow the passive diffusion of ions and small molecules and the active, nuclear transport receptor-mediated bidirectional transport of macromolecules such as proteins, RNAs, ribonucleoparticles (RNPs), and ribosomal subunits across the nuclear envelope. Due to its 8-fold rotational symmetry, all subunits are present with 8 copies or multiples thereof. Part of a tetrameric NUP192-NUP170-NIC96-NUP53 or NUP188-NUP170-NIC96-NUP53 module.

The protein localises to the nucleus. Its subcellular location is the nuclear pore complex. It localises to the nucleus membrane. Functions as a component of the nuclear pore complex (NPC). NPC components, collectively referred to as nucleoporins (NUPs), can play the role of both NPC structural components and of docking or interaction partners for transiently associated nuclear transport factors. NUP170 probably plays an important role in NPC assembly and organization. This Chaetomium thermophilum (strain DSM 1495 / CBS 144.50 / IMI 039719) (Thermochaetoides thermophila) protein is Nucleoporin NUP170 (NUP170).